The following is a 255-amino-acid chain: Aliphatic sulfonates import ATP-binding protein SsuB (255 aa).

One can recognise an ABC transporter domain in the interval 12–233; it reads LLLNAVSKHY…RLGSVRLAEL (222 aa). 44 to 51 is a binding site for ATP; it reads GRSGGGKS.

It belongs to the ABC transporter superfamily. Aliphatic sulfonates importer (TC 3.A.1.17.2) family. In terms of assembly, the complex is composed of two ATP-binding proteins (SsuB), two transmembrane proteins (SsuC) and a solute-binding protein (SsuA).

The protein localises to the cell inner membrane. The catalysed reaction is ATP + H2O + aliphatic sulfonate-[sulfonate-binding protein]Side 1 = ADP + phosphate + aliphatic sulfonateSide 2 + [sulfonate-binding protein]Side 1.. In terms of biological role, part of the ABC transporter complex SsuABC involved in aliphatic sulfonates import. Responsible for energy coupling to the transport system. In Shigella flexneri serotype 5b (strain 8401), this protein is Aliphatic sulfonates import ATP-binding protein SsuB.